The following is a 346-amino-acid chain: MILEKYGFTSFFEEQKIAATSSYGRVTAVFRDFYRVITENGEFLATLKRGNFYELSPSNLPAVGDFVEVSNEKQILSVLQRKTIFSRMTKDSEEQLIAANFDYALIVMSLNHDFNLNRLERYLTVAWDSGATPIIILTKADLVDDLTPFTMELETVAYGVPTYYVDNLSHRGFEALEADLKPNSTLVLLGSSGVGKSSFINSLAGADLMKTSEIREDDSKGKHTTTHREMHLLANGWIIIDTPGMREFGIGLNQAGLETTFSDVEELSKDCRFHDCSHTSEPGCAVQESLADGTLSLKHYENWQKLQREMAYHARKNSPALARQERDRWKTIQKSLRTHLKTRPKR.

Residues glutamate 93 to phenylalanine 248 enclose the CP-type G domain. GTP is bound by residues threonine 138–aspartate 141 and glycine 190–serine 198. Zn(2+) is bound by residues cysteine 271, cysteine 276, histidine 278, and cysteine 284.

Belongs to the TRAFAC class YlqF/YawG GTPase family. RsgA subfamily. Monomer. Associates with 30S ribosomal subunit, binds 16S rRNA. Zn(2+) serves as cofactor.

It localises to the cytoplasm. Its function is as follows. One of several proteins that assist in the late maturation steps of the functional core of the 30S ribosomal subunit. Helps release RbfA from mature subunits. May play a role in the assembly of ribosomal proteins into the subunit. Circularly permuted GTPase that catalyzes slow GTP hydrolysis, GTPase activity is stimulated by the 30S ribosomal subunit. This Listeria innocua serovar 6a (strain ATCC BAA-680 / CLIP 11262) protein is Small ribosomal subunit biogenesis GTPase RsgA 1.